We begin with the raw amino-acid sequence, 212 residues long: MGMKLHGPAMSPAVMRVIATLKEKDLDFELVPVNMQAGDHKKEPFITLNPFGQVPAFEDGDLKLFESRAITQYIAHTYADKGNQLLANDPKKMAIMSVWMEVESQKFDPVASKLTFEIVIKPMLGMVTDDAAVAENEEKLGKVLDVYESRLKDSKYLGGDSFTLADLHHAPAMNYLMGTKVKSLFDSRPHVSAWCADILARPAWSKAIEYKQ.

A GST N-terminal domain is found at 1-82; sequence MGMKLHGPAM…YIAHTYADKG (82 aa). Residues Ser11, 12-13, 40-41, 53-54, and 66-67 contribute to the glutathione site; these read PA, HK, QV, and ES. In terms of domain architecture, GST C-terminal spans 89–212; the sequence is DPKKMAIMSV…AWSKAIEYKQ (124 aa).

This sequence belongs to the GST superfamily. Phi family.

It catalyses the reaction RX + glutathione = an S-substituted glutathione + a halide anion + H(+). Conjugation of reduced glutathione to a wide number of exogenous and endogenous hydrophobic electrophiles. The polypeptide is Glutathione S-transferase (Hyoscyamus muticus (Egyptian henbane)).